We begin with the raw amino-acid sequence, 185 residues long: Acireductone dioxygenase (185 aa).

His-96, His-98, Glu-102, and His-140 together coordinate Fe(2+). Residues His-96, His-98, Glu-102, and His-140 each coordinate Ni(2+).

The protein belongs to the acireductone dioxygenase (ARD) family. In terms of assembly, monomer. Requires Fe(2+) as cofactor. It depends on Ni(2+) as a cofactor.

It carries out the reaction 1,2-dihydroxy-5-(methylsulfanyl)pent-1-en-3-one + O2 = 3-(methylsulfanyl)propanoate + CO + formate + 2 H(+). The catalysed reaction is 1,2-dihydroxy-5-(methylsulfanyl)pent-1-en-3-one + O2 = 4-methylsulfanyl-2-oxobutanoate + formate + 2 H(+). It participates in amino-acid biosynthesis; L-methionine biosynthesis via salvage pathway; L-methionine from S-methyl-5-thio-alpha-D-ribose 1-phosphate: step 5/6. In terms of biological role, catalyzes 2 different reactions between oxygen and the acireductone 1,2-dihydroxy-3-keto-5-methylthiopentene (DHK-MTPene) depending upon the metal bound in the active site. Fe-containing acireductone dioxygenase (Fe-ARD) produces formate and 2-keto-4-methylthiobutyrate (KMTB), the alpha-ketoacid precursor of methionine in the methionine recycle pathway. Ni-containing acireductone dioxygenase (Ni-ARD) produces methylthiopropionate, carbon monoxide and formate, and does not lie on the methionine recycle pathway. In Hahella chejuensis (strain KCTC 2396), this protein is Acireductone dioxygenase.